Reading from the N-terminus, the 488-residue chain is MAAGSEATTPVIVAAGAGGEEGEHVKPFKPEKAKEIIMSLQQPAIFCNMVFDWPARHWNAKYLSQVLHGKQIRFRMGMKSMSTVPQFETTCNYVEATLEEFLTWNCDQSSISGPFRDYDHSKFWAYADYKYFVSLFEDKTDLFQDVKWSDFGFPGRNGQESTLWIGSLGAHTPCHLDSYGCNLVFQVQGRKRWHLFPPEDTPFLYPTRIPYEESSVFSKINVVNPDLKRFPQFRKAQRHAVTLSPGQVLFVPRHWWHYVESIDPVTVSINSWIELEEDHLARVEEAITRMLVCALKTAENPQNTRAWLNPTEVEETSHAVNCCYLNAAVSAFFDRCRTSEVVEIQALRTDGEHMKKEELNVCNHMEVGQTGSQNLTTGTDKPEAASPFGPDLVPVAQRSEEPPSERGGIFGSDGKDFVDKDGEHFGKLHCAKRQQIMSNSENAIEEQIASNTTTTPQTFISTDDLLDCLVNPQVTRIVAQLLIQGRSL.

The segment at 88-208 (ETTCNYVEAT…EDTPFLYPTR (121 aa)) is interaction with HSPB1. In terms of domain architecture, JmjC spans 124–288 (WAYADYKYFV…HLARVEEAIT (165 aa)). Polar residues predominate over residues 369–379 (QTGSQNLTTGT). A disordered region spans residues 369-415 (QTGSQNLTTGTDKPEAASPFGPDLVPVAQRSEEPPSERGGIFGSDGK).

Interacts with CRYAB and HSPB1. In terms of tissue distribution, widely expressed.

It is found in the cytoplasm. In terms of biological role, may play a role in cellular stress response. This Homo sapiens (Human) protein is HSPB1-associated protein 1 (HSPBAP1).